The primary structure comprises 105 residues: MITDEEIRKVIAPLLLSGAKMLDKHCPKCGSPLFEKDGRVFCPVCEYREKKKREEMKGVEEVLMEKFKDLAFSLPKDVNELMQHLDAMEKLLTIIERYRKLEGRG.

This sequence belongs to the UPF0148 family.

The sequence is that of UPF0148 protein PYRAB12700 from Pyrococcus abyssi (strain GE5 / Orsay).